A 730-amino-acid chain; its full sequence is MPQTAGPDTIRILVSTDNHVGYEERDPIRKDDSWRTFDEIMQLARTKDVDMVLLGGDLFHDNKPSRKAMYQVMRSLRKNCLGMKPCELEFLSDPAEVFEGAFPHVNYYDPDINVSIPVFSIHGNHDDPSGDGHLCSLDLLQVAGLVNYFGRVPEADNIHVKPILLQKGKTKLALYGMSNVRDERIHRTFRDNKVRFYRPSQQTGDWFNLLTLHQNHYAHTPTGYLSENMLPDFLDLVIWGHEHECLIDPKKNPETGFHVMQPGSSIATSLVPGEAVPKHIAILSITGKSFEVEKIPLRTVRPFVIREITLATDKRFKGLEKKQDNRQEVTKRLMQIVEEMIAEANEMWRSLHEDSQDDEDEEQPLPLIRLKVEYSSPEGTKFEVENPQRFSNRFAGKVANQNDVVHFYRKKTGTTRKPKEGKRELPEGIAEALEDSDSISVDALVQEFFAQQSLKILPQAPFGDAVNQFVSKDDKHAVEMFVMDSLSSQVRGLLQLDDDKINEGLDSHIEDFRKVMEKNFLSGQQKQAQRRRRFKEKPEGWDSDLNGHWTLQPEAIEELSSSPEPAKEGGRVRPASRITVGDEDNLFEEEEFVQKTTAKRAPTTRATRKTAAATRATTATKASAPAKKSIAAPRGRKRANPFQDSAEEEEDVIMDDDDDYKPAPPVKAPPPKPARETQTRGAPKTRQTTLNFSQAERPTRTTQKAIEISDDEISEDDAFESMPARKSKRY.

Residues Asp-17, His-19, Asp-57, and Asn-124 each contribute to the Mn(2+) site. His-125 serves as the catalytic Proton donor. 3 residues coordinate Mn(2+): His-213, His-241, and His-243. A disordered region spans residues Leu-521 to Tyr-730. Residues Gly-581–Glu-591 show a composition bias toward acidic residues. Residues Lys-595–Pro-633 are compositionally biased toward low complexity. The span at Ser-645 to Asp-659 shows a compositional bias: acidic residues. Positions Pro-662–Lys-672 are enriched in pro residues. Over residues Thr-685–Lys-704 the composition is skewed to polar residues. The segment covering Ile-708–Phe-719 has biased composition (acidic residues).

Belongs to the MRE11/RAD32 family. In terms of assembly, component of the MRN complex composed of two heterodimers RAD50 and MRE11 associated with a single NBS1. Mn(2+) is required as a cofactor.

It is found in the nucleus. It localises to the chromosome. Its subcellular location is the telomere. Core component of the MRN complex, which plays a central role in double-strand break (DSB) repair, DNA recombination, maintenance of telomere integrity and meiosis. The MRN complex is involved in the repair of DNA double-strand breaks (DSBs) via homologous recombination (HR), an error-free mechanism which primarily occurs during S and G2 phases. The complex (1) mediates the end resection of damaged DNA, which generates proper single-stranded DNA, a key initial steps in HR, and is (2) required for the recruitment of other repair factors and efficient activation of ATM and ATR upon DNA damage. Within the MRN complex, MRE11 possesses both single-strand endonuclease activity and double-strand-specific 3'-5' exonuclease activity. MRE11 first endonucleolytically cleaves the 5' strand at DNA DSB ends to prevent non-homologous end joining (NHEJ) and licence HR. It then generates a single-stranded DNA gap via 3' to 5' exonucleolytic degradation, which is required for single-strand invasion and recombination. The protein is Double-strand break repair protein MRE11 of Chaetomium thermophilum (strain DSM 1495 / CBS 144.50 / IMI 039719) (Thermochaetoides thermophila).